Reading from the N-terminus, the 207-residue chain is Gap junction epsilon-1 protein (207 aa).

The Cytoplasmic portion of the chain corresponds to 1–22 (MSLNYIKNFYEGCLRPPTVIGQ). Residues 23–43 (FHTLFFGSVRTFFLGVLGFAV) form a helical membrane-spanning segment. Over 44-74 (YGNEALHFSCDPDKRELNLYCYNQFRPITPQ) the chain is Extracellular. Intrachain disulfides connect cysteine 53-cysteine 161 and cysteine 64-cysteine 147. Residues 75 to 95 (VFWALQLVTVLVPGAVFHLYA) traverse the membrane as a helical segment. Residues 96–111 (ACKNIDQEEILHRPMS) lie on the Cytoplasmic side of the membrane. Residues 112 to 132 (TVFYIISVLLRIILEVLAFWL) form a helical membrane-spanning segment. Residues 133-175 (QSHLFGFLVDPIFMCDVTGLGKILNVSKCMVPEHFEKTIFLSA) lie on the Extracellular side of the membrane. A helical membrane pass occupies residues 176–196 (MYTFTIITILLCIAEIFEILF). Over 197–207 (RRLGYLNQPMT) the chain is Cytoplasmic.

Belongs to the connexin family. Beta-type (group I) subfamily. In terms of assembly, a connexon is composed of a hexamer of connexins.

Its subcellular location is the cell membrane. Has significant hemichannel activity. However, has only low-efficiency gap junction activity and probably does not function as a gap junction channel in vivo. This is Gap junction epsilon-1 protein from Danio rerio (Zebrafish).